A 246-amino-acid chain; its full sequence is Pyridoxine 5'-phosphate synthase (246 aa).

Asparagine 7 serves as a coordination point for 3-amino-2-oxopropyl phosphate. 9–10 (DH) serves as a coordination point for 1-deoxy-D-xylulose 5-phosphate. Arginine 18 serves as a coordination point for 3-amino-2-oxopropyl phosphate. The active-site Proton acceptor is the histidine 43. 2 residues coordinate 1-deoxy-D-xylulose 5-phosphate: arginine 45 and histidine 50. Glutamate 70 functions as the Proton acceptor in the catalytic mechanism. Threonine 100 lines the 1-deoxy-D-xylulose 5-phosphate pocket. Histidine 190 functions as the Proton donor in the catalytic mechanism. 3-amino-2-oxopropyl phosphate-binding positions include glycine 191 and 212 to 213 (GH).

This sequence belongs to the PNP synthase family. In terms of assembly, homooctamer; tetramer of dimers.

Its subcellular location is the cytoplasm. The enzyme catalyses 3-amino-2-oxopropyl phosphate + 1-deoxy-D-xylulose 5-phosphate = pyridoxine 5'-phosphate + phosphate + 2 H2O + H(+). Its pathway is cofactor biosynthesis; pyridoxine 5'-phosphate biosynthesis; pyridoxine 5'-phosphate from D-erythrose 4-phosphate: step 5/5. Catalyzes the complicated ring closure reaction between the two acyclic compounds 1-deoxy-D-xylulose-5-phosphate (DXP) and 3-amino-2-oxopropyl phosphate (1-amino-acetone-3-phosphate or AAP) to form pyridoxine 5'-phosphate (PNP) and inorganic phosphate. This Prochlorococcus marinus (strain SARG / CCMP1375 / SS120) protein is Pyridoxine 5'-phosphate synthase.